Consider the following 1336-residue polypeptide: SH3 domain and tetratricopeptide repeat-containing protein 1 (1336 aa).

Residue Met-1 is modified to N-acetylmethionine. Disordered regions lie at residues 1–76 and 225–266; these read MENL…PPCQ and TGPR…SEEV. The segment covering 18–27 has biased composition (gly residues); the sequence is GPVGPSGGGS. The span at 46-61 shows a compositional bias: basic and acidic residues; the sequence is AGPEEAKAPVRGDEAP. Low complexity-rich tracts occupy residues 62 to 74 and 247 to 266; these read PARV…GTPP and EAAP…SEEV. The 64-residue stretch at 305–368 folds into the SH3 domain; it reads MAVGLASALA…RSSLISMQGP (64 aa). TPR repeat units follow at residues 560 to 593, 601 to 634, 665 to 698, 786 to 819, 863 to 896, 946 to 979, 1027 to 1063, and 1192 to 1225; these read ARLC…LEGS, VAVY…LLGT, ARAC…HRDS, GPLY…SAIA, GVIA…ARDL, THVL…AVEM, GQLL…FIDL, and RVAY…CNSP. Tyr-1248 bears the Phosphotyrosine mark. Residues 1277–1311 form a TPR 9 repeat; sequence LKIYTRLATIYHNFLLDREKSLFFYQKARTFATEL.

In Homo sapiens (Human), this protein is SH3 domain and tetratricopeptide repeat-containing protein 1 (SH3TC1).